Reading from the N-terminus, the 351-residue chain is Phosphoribosylformylglycinamidine cyclo-ligase (351 aa).

It belongs to the AIR synthase family.

It localises to the cytoplasm. The catalysed reaction is 2-formamido-N(1)-(5-O-phospho-beta-D-ribosyl)acetamidine + ATP = 5-amino-1-(5-phospho-beta-D-ribosyl)imidazole + ADP + phosphate + H(+). It functions in the pathway purine metabolism; IMP biosynthesis via de novo pathway; 5-amino-1-(5-phospho-D-ribosyl)imidazole from N(2)-formyl-N(1)-(5-phospho-D-ribosyl)glycinamide: step 2/2. This Oleidesulfovibrio alaskensis (strain ATCC BAA-1058 / DSM 17464 / G20) (Desulfovibrio alaskensis) protein is Phosphoribosylformylglycinamidine cyclo-ligase.